The primary structure comprises 179 residues: Large ribosomal subunit protein uL5 (179 aa).

It belongs to the universal ribosomal protein uL5 family. Part of the 50S ribosomal subunit; part of the 5S rRNA/L5/L18/L25 subcomplex. Contacts the 5S rRNA and the P site tRNA. Forms a bridge to the 30S subunit in the 70S ribosome.

This is one of the proteins that bind and probably mediate the attachment of the 5S RNA into the large ribosomal subunit, where it forms part of the central protuberance. In the 70S ribosome it contacts protein S13 of the 30S subunit (bridge B1b), connecting the 2 subunits; this bridge is implicated in subunit movement. Contacts the P site tRNA; the 5S rRNA and some of its associated proteins might help stabilize positioning of ribosome-bound tRNAs. The chain is Large ribosomal subunit protein uL5 from Rhodospirillum rubrum (strain ATCC 11170 / ATH 1.1.1 / DSM 467 / LMG 4362 / NCIMB 8255 / S1).